The following is a 101-amino-acid chain: Large ribosomal subunit protein uL23 (101 aa).

It belongs to the universal ribosomal protein uL23 family. As to quaternary structure, part of the 50S ribosomal subunit. Contacts protein L29, and trigger factor when it is bound to the ribosome.

In terms of biological role, one of the early assembly proteins it binds 23S rRNA. One of the proteins that surrounds the polypeptide exit tunnel on the outside of the ribosome. Forms the main docking site for trigger factor binding to the ribosome. This chain is Large ribosomal subunit protein uL23, found in Leptospira biflexa serovar Patoc (strain Patoc 1 / Ames).